A 295-amino-acid chain; its full sequence is Phosphatidylglycerol--prolipoprotein diacylglyceryl transferase (295 aa).

The next 7 membrane-spanning stretches (helical) occupy residues 17–37, 57–77, 92–112, 127–147, 196–216, 222–242, and 255–275; these read IKVH…WLLG, LLFY…MLFY, VWDG…ACWW, FMAP…FIGA, QLYE…AVSA, YLVG…VEFV, and WLTR…VLLV. Residue arginine 140 coordinates a 1,2-diacyl-sn-glycero-3-phospho-(1'-sn-glycerol).

It belongs to the Lgt family.

It localises to the cell inner membrane. It carries out the reaction L-cysteinyl-[prolipoprotein] + a 1,2-diacyl-sn-glycero-3-phospho-(1'-sn-glycerol) = an S-1,2-diacyl-sn-glyceryl-L-cysteinyl-[prolipoprotein] + sn-glycerol 1-phosphate + H(+). It participates in protein modification; lipoprotein biosynthesis (diacylglyceryl transfer). In terms of biological role, catalyzes the transfer of the diacylglyceryl group from phosphatidylglycerol to the sulfhydryl group of the N-terminal cysteine of a prolipoprotein, the first step in the formation of mature lipoproteins. The sequence is that of Phosphatidylglycerol--prolipoprotein diacylglyceryl transferase from Stenotrophomonas maltophilia (strain R551-3).